Here is a 173-residue protein sequence, read N- to C-terminus: MPDATLSNTSLGRLAWLWLTVLIVAVDQVSKYYFENALSLYQQIIVIPDYFSWTLAYNTGAAFSFLADGAGWQRWLFALIAVVVSAVLVVWLKRLGRDDTWLAIALALVLGGALGNLYDRVVLGHVIDFILVHWQNRWYFPAFNVADSAITVGAIMLALDMFKSKKTGETVND.

The next 4 helical transmembrane spans lie at 14–34, 44–64, 72–92, and 98–118; these read LAWLWLTVLIVAVDQVSKYYF, IIVIPDYFSWTLAYNTGAAFS, WQRWLFALIAVVVSAVLVVWL, and DDTWLAIALALVLGGALGNLY. Catalysis depends on residues aspartate 128 and aspartate 147. A helical transmembrane segment spans residues 139–159; it reads YFPAFNVADSAITVGAIMLAL.

Belongs to the peptidase A8 family.

The protein resides in the cell inner membrane. It catalyses the reaction Release of signal peptides from bacterial membrane prolipoproteins. Hydrolyzes -Xaa-Yaa-Zaa-|-(S,diacylglyceryl)Cys-, in which Xaa is hydrophobic (preferably Leu), and Yaa (Ala or Ser) and Zaa (Gly or Ala) have small, neutral side chains.. The protein operates within protein modification; lipoprotein biosynthesis (signal peptide cleavage). In terms of biological role, this protein specifically catalyzes the removal of signal peptides from prolipoproteins. The protein is Lipoprotein signal peptidase of Pseudomonas syringae pv. tomato (strain ATCC BAA-871 / DC3000).